The following is a 1072-amino-acid chain: DNA-directed RNA polymerase subunit beta (1072 aa).

This sequence belongs to the RNA polymerase beta chain family. In plastids the minimal PEP RNA polymerase catalytic core is composed of four subunits: alpha, beta, beta', and beta''. When a (nuclear-encoded) sigma factor is associated with the core the holoenzyme is formed, which can initiate transcription.

It localises to the plastid. The protein localises to the chloroplast. It carries out the reaction RNA(n) + a ribonucleoside 5'-triphosphate = RNA(n+1) + diphosphate. Functionally, DNA-dependent RNA polymerase catalyzes the transcription of DNA into RNA using the four ribonucleoside triphosphates as substrates. This Arabis hirsuta (Hairy rock-cress) protein is DNA-directed RNA polymerase subunit beta.